Here is a 267-residue protein sequence, read N- to C-terminus: Matrilysin (267 aa).

A signal peptide spans 1 to 17; it reads MRLTVLCAVCLLPGSLA. Positions 18 to 94 are cleaved as a propeptide — activation peptide; sequence LPLPQEAGGM…PRCGVPDVAE (77 aa). The short motif at 85-92 is the Cysteine switch element; the sequence is PRCGVPDV. Cys-87 serves as a coordination point for Zn(2+). Asp-153 contacts Ca(2+). The Zn(2+) site is built by His-163 and Asp-165. Ca(2+) is bound by residues Asp-170, Gly-171, Gly-173, and Thr-175. Residue His-178 participates in Zn(2+) binding. Ca(2+)-binding residues include Gly-185, Gly-187, and Asp-189. His-191 provides a ligand contact to Zn(2+). Ca(2+) is bound by residues Asp-193 and Glu-196. Zn(2+) is bound at residue His-214. The active site involves Glu-215. Residues His-218 and His-224 each coordinate Zn(2+).

The protein belongs to the peptidase M10A family. It depends on Ca(2+) as a cofactor. Requires Zn(2+) as cofactor.

Its subcellular location is the secreted. It localises to the extracellular space. It is found in the extracellular matrix. It catalyses the reaction Cleavage of 14-Ala-|-Leu-15 and 16-Tyr-|-Leu-17 in B chain of insulin. No action on collagen types I, II, IV, V. Cleaves gelatin chain alpha2(I) &gt; alpha1(I).. In terms of biological role, degrades casein, gelatins of types I, III, IV, and V, and fibronectin. Activates procollagenase. The sequence is that of Matrilysin (MMP7) from Homo sapiens (Human).